The sequence spans 81 residues: Photosystem I iron-sulfur center (81 aa).

2 consecutive 4Fe-4S ferredoxin-type domains span residues 2–31 and 39–68; these read SHSV…MVAW and IASA…VRVY. The [4Fe-4S] cluster site is built by C11, C14, C17, C21, C48, C51, C54, and C58.

As to quaternary structure, the eukaryotic PSI reaction center is composed of at least 11 subunits. [4Fe-4S] cluster is required as a cofactor.

It is found in the plastid. It localises to the chloroplast thylakoid membrane. The catalysed reaction is reduced [plastocyanin] + hnu + oxidized [2Fe-2S]-[ferredoxin] = oxidized [plastocyanin] + reduced [2Fe-2S]-[ferredoxin]. In terms of biological role, apoprotein for the two 4Fe-4S centers FA and FB of photosystem I (PSI); essential for photochemical activity. FB is the terminal electron acceptor of PSI, donating electrons to ferredoxin. The C-terminus interacts with PsaA/B/D and helps assemble the protein into the PSI complex. Required for binding of PsaD and PsaE to PSI. PSI is a plastocyanin/cytochrome c6-ferredoxin oxidoreductase, converting photonic excitation into a charge separation, which transfers an electron from the donor P700 chlorophyll pair to the spectroscopically characterized acceptors A0, A1, FX, FA and FB in turn. The protein is Photosystem I iron-sulfur center of Guillardia theta (Cryptophyte).